Reading from the N-terminus, the 697-residue chain is Potassium-transporting ATPase ATP-binding subunit (697 aa).

A run of 4 helical transmembrane segments spans residues 55 to 75 (PIMFVVEIGFVITFILSFFPS), 79 to 99 (SIPGWFNITVSLILLFTVLFA), 245 to 265 (LTLIFLIVVVTLPIFTNYLGF), and 271 to 291 (VLVALLVCLIPTTIGGLLSAI). Residue aspartate 324 is the 4-aspartylphosphate intermediate of the active site. Residues aspartate 361, glutamate 365, 393 to 400 (FKAETRMS), and lysine 412 each bind ATP. 2 residues coordinate Mg(2+): aspartate 535 and aspartate 539. Transmembrane regions (helical) follow at residues 605–625 (FAIIPAMFTLAIPQMEALNIM), 633–653 (AILSALLFNAVIIPLLIPLAM), and 677–697 (GGVIVPFIGIKVIDIIVGLFI).

This sequence belongs to the cation transport ATPase (P-type) (TC 3.A.3) family. Type IA subfamily. As to quaternary structure, the system is composed of three essential subunits: KdpA, KdpB and KdpC.

Its subcellular location is the cell membrane. The catalysed reaction is K(+)(out) + ATP + H2O = K(+)(in) + ADP + phosphate + H(+). In terms of biological role, part of the high-affinity ATP-driven potassium transport (or Kdp) system, which catalyzes the hydrolysis of ATP coupled with the electrogenic transport of potassium into the cytoplasm. This subunit is responsible for energy coupling to the transport system and for the release of the potassium ions to the cytoplasm. This is Potassium-transporting ATPase ATP-binding subunit from Bacillus cereus (strain AH820).